Reading from the N-terminus, the 721-residue chain is Ophiobolin F synthase oblA (721 aa).

Positions 5–325 (YDQPYSVLLD…RYNLKAEWNE (321 aa)) are (7Z)-ophiobola-7,19-dien-3-ol synthase. Mg(2+) contacts are provided by Asp97 and Asp101. Asp97 contacts substrate. The short motif at 97–101 (DDVID) is the DDXXD 1 element. Substrate is bound by residues 185-188 (RSLD), Asn229, 233-237 (SFEKE), and 316-317 (RY). The short motif at 229–237 (NDLFSFEKE) is the NSE/DTE element. The geranylfarnesyl diphosphate synthase stretch occupies residues 326–721 (LQMLRAKHGV…LRLMMEMLKV (396 aa)). The disordered stretch occupies residues 348–387 (SMDHIWKKGSTQGESKGEKRKRQSVNGTNGVNGTNGVKKP). The span at 372-384 (VNGTNGVNGTNGV) shows a compositional bias: low complexity. Isopentenyl diphosphate contacts are provided by Lys432, Arg435, and His464. Asp471 and Asp475 together coordinate Mg(2+). Residues 471-475 (DDLED) carry the DDXXD 2 motif. Arg480 contributes to the dimethylallyl diphosphate binding site. An isopentenyl diphosphate-binding site is contributed by Arg481. Dimethylallyl diphosphate-binding residues include Lys558, Thr559, Gln597, Asn604, Lys614, and Lys624.

In the N-terminal section; belongs to the terpene synthase family. This sequence in the C-terminal section; belongs to the FPP/GGPP synthase family. Requires Mg(2+) as cofactor.

The catalysed reaction is isopentenyl diphosphate + (2E,6E)-farnesyl diphosphate = (2E,6E,10E)-geranylgeranyl diphosphate + diphosphate. The enzyme catalyses isopentenyl diphosphate + (2E,6E,10E)-geranylgeranyl diphosphate = (2E,6E,10E,14E)-geranylfarnesyl diphosphate + diphosphate. It catalyses the reaction (2E,6E,10E,14E)-geranylfarnesyl diphosphate + H2O = ophiobolin F + diphosphate. Its pathway is secondary metabolite biosynthesis; terpenoid biosynthesis. Functionally, bifunctional sesterterpene synthase; part of the gene cluster that mediates the biosynthesis of the sesterterpenes ophiobolins, fungal phytotoxins with potential anti-cancer activities. The first step of the pathway is performed by the sesterterpene synthase oblA that possesses both prenyl transferase and terpene cyclase activity, converting isopentenyl diphosphate and dimethylallyl diphosphate into geranylfarnesyl diphosphate (GFPP) and further converting GFPP into ophiobolin F, respectively. Other sesterterpenoids (C(25) terpenoids) are found as minor products of oblA. The cytochrome P450 monooxygenase oblB then catalyzes a four-step oxidative transformation of ophiobolin F to yield ophiobolin C. The FAD-dependent oxidoreductase oblC might be involved in a later oxidation step that produces ophiobolin A. The chain is Ophiobolin F synthase oblA from Cochliobolus heterostrophus (strain C5 / ATCC 48332 / race O) (Southern corn leaf blight fungus).